The primary structure comprises 373 residues: UDP-N-acetylglucosamine--N-acetylmuramyl-(pentapeptide) pyrophosphoryl-undecaprenol N-acetylglucosamine transferase (373 aa).

Residues 14–16 (TAG), asparagine 128, arginine 165, serine 199, and glutamine 295 contribute to the UDP-N-acetyl-alpha-D-glucosamine site.

Belongs to the glycosyltransferase 28 family. MurG subfamily.

The protein resides in the cell membrane. The enzyme catalyses di-trans,octa-cis-undecaprenyl diphospho-N-acetyl-alpha-D-muramoyl-L-alanyl-D-glutamyl-meso-2,6-diaminopimeloyl-D-alanyl-D-alanine + UDP-N-acetyl-alpha-D-glucosamine = di-trans,octa-cis-undecaprenyl diphospho-[N-acetyl-alpha-D-glucosaminyl-(1-&gt;4)]-N-acetyl-alpha-D-muramoyl-L-alanyl-D-glutamyl-meso-2,6-diaminopimeloyl-D-alanyl-D-alanine + UDP + H(+). The protein operates within cell wall biogenesis; peptidoglycan biosynthesis. Its function is as follows. Cell wall formation. Catalyzes the transfer of a GlcNAc subunit on undecaprenyl-pyrophosphoryl-MurNAc-pentapeptide (lipid intermediate I) to form undecaprenyl-pyrophosphoryl-MurNAc-(pentapeptide)GlcNAc (lipid intermediate II). The protein is UDP-N-acetylglucosamine--N-acetylmuramyl-(pentapeptide) pyrophosphoryl-undecaprenol N-acetylglucosamine transferase of Mycobacterium sp. (strain JLS).